A 597-amino-acid chain; its full sequence is UvrABC system protein C (597 aa).

Positions 15 to 93 (NSPGVYQYFD…IKKHQPRFNV (79 aa)) constitute a GIY-YIG domain. Residues 207 to 242 (KDSLQRFRNQMKQHSEKMEFEDAQRIKNKIDVLENY) form the UVR domain.

This sequence belongs to the UvrC family. Interacts with UvrB in an incision complex.

The protein localises to the cytoplasm. In terms of biological role, the UvrABC repair system catalyzes the recognition and processing of DNA lesions. UvrC both incises the 5' and 3' sides of the lesion. The N-terminal half is responsible for the 3' incision and the C-terminal half is responsible for the 5' incision. The polypeptide is UvrABC system protein C (Christiangramia forsetii (strain DSM 17595 / CGMCC 1.15422 / KT0803) (Gramella forsetii)).